Consider the following 352-residue polypeptide: MTELELLGPRASGEPLGTAILKAVAEDFQVDEVLDIPLSGQGEHLWLWVEKRDLNTEEAARRLARAAGVPVRSISYAGLKDRQALTRQWFSLHLPGKADPDLSRAEDASLRVLKQVRHQRKLQRGAHSANGFTLRLTALAADHQAVDARLEQLRQQGVPNYFGTQRFGHGGGNVHDALDWAARKALPEQRNVRSRLLSAGRSYLFNQLLAARVADGSWARAQVGDLLAFTDSRSFFPAGEAECADPRLAILDLHPTGPMWGEGASPAGGAPAQLENAIGARQPALCQWLAQAGMDHERRILRLPIGGLTWHYPEPDILQLEFVLPAGCFATVVVREVVDLVSAGQTDSPCVF.

Aspartate 81 functions as the Nucleophile in the catalytic mechanism. In terms of domain architecture, TRUD spans 157–303; the sequence is GVPNYFGTQR…MDHERRILRL (147 aa).

Belongs to the pseudouridine synthase TruD family.

It carries out the reaction uridine(13) in tRNA = pseudouridine(13) in tRNA. Responsible for synthesis of pseudouridine from uracil-13 in transfer RNAs. This chain is tRNA pseudouridine synthase D, found in Pseudomonas putida (strain ATCC 47054 / DSM 6125 / CFBP 8728 / NCIMB 11950 / KT2440).